We begin with the raw amino-acid sequence, 450 residues long: MKTVTEYQNKNVLVLGIAKSGYAAATLLKKLGANVIVNDGKPLAGNVLAAELQAEGMDVVCGGHPLELLERNISLVVKNPGIPYSNPLLVAAKEKQIPIVTEVELAYSISAAPFVGITGSNGKTTTTMLTFEMLKEGQKHPVIAGNIGTVACEVAQLAKENEVVVTELSSFQLMGVESFQPKIAAFLNLFEAHLDYHGTKKEYGLAKANIFKNQTETDYSIINADDADVMALSAYSKGQKVLFSTTKEIEDGAYIKDNALYFKGEKVVKVSDIVLPGKHNLENILAAMSIAKLLGVSNEAITAVLKSFTGVKHRLEYVTTINNRKFYNDSKATNMLATEKALSAFTQPIVLLAGGLDRGNEFDDLIPYFKHVKAIVTFGQTAPKLVRAAEKAGLDVIESVDTLDDAVVKAYAHSTDGDVILLSPACASWDQFKTFEERGDIFIQAVHKLI.

Position 119–125 (Gly119–Thr125) interacts with ATP.

The protein belongs to the MurCDEF family.

The protein resides in the cytoplasm. The catalysed reaction is UDP-N-acetyl-alpha-D-muramoyl-L-alanine + D-glutamate + ATP = UDP-N-acetyl-alpha-D-muramoyl-L-alanyl-D-glutamate + ADP + phosphate + H(+). It functions in the pathway cell wall biogenesis; peptidoglycan biosynthesis. In terms of biological role, cell wall formation. Catalyzes the addition of glutamate to the nucleotide precursor UDP-N-acetylmuramoyl-L-alanine (UMA). The sequence is that of UDP-N-acetylmuramoylalanine--D-glutamate ligase from Bacillus mycoides (strain KBAB4) (Bacillus weihenstephanensis).